The following is a 133-amino-acid chain: Large ribosomal subunit protein bL17 (133 aa).

The protein belongs to the bacterial ribosomal protein bL17 family. In terms of assembly, part of the 50S ribosomal subunit. Contacts protein L32.

This chain is Large ribosomal subunit protein bL17, found in Pseudoalteromonas translucida (strain TAC 125).